Reading from the N-terminus, the 45-residue chain is Large ribosomal subunit protein bL34 (45 aa).

Belongs to the bacterial ribosomal protein bL34 family.

The polypeptide is Large ribosomal subunit protein bL34 (Salinispora arenicola (strain CNS-205)).